Consider the following 712-residue polypeptide: Ribosomal RNA large subunit methyltransferase K/L (712 aa).

The THUMP domain maps to Leu43–Phe154.

This sequence belongs to the methyltransferase superfamily. RlmKL family.

The protein localises to the cytoplasm. The catalysed reaction is guanosine(2445) in 23S rRNA + S-adenosyl-L-methionine = N(2)-methylguanosine(2445) in 23S rRNA + S-adenosyl-L-homocysteine + H(+). The enzyme catalyses guanosine(2069) in 23S rRNA + S-adenosyl-L-methionine = N(2)-methylguanosine(2069) in 23S rRNA + S-adenosyl-L-homocysteine + H(+). Specifically methylates the guanine in position 2445 (m2G2445) and the guanine in position 2069 (m7G2069) of 23S rRNA. This Shewanella frigidimarina (strain NCIMB 400) protein is Ribosomal RNA large subunit methyltransferase K/L.